The chain runs to 565 residues: MSGRSKRESRGSTRGKRESESRGSSGRVKRERDREREPEAASSRGSPVRVKREFEPASAREAPASVVPFVRVKREREVDEDSEPEREVRAKNGRVDSEDRRSRHCPYLDTINRSVLDFDFEKLCSISPSHVNAYACLVCGKYFQGRGLKSHAYIHSVQFSHHVFLNLHTLKFYCLPDNYEIIDSSLEDITYVLKPTFTKQQIANLDKQAKLSRAYDGTTYLPGIVGLNNIKANDYANAVLQALSNVPPLRNYFLEEDNYKNIKRPPGDIMFLLVQRFGELMRKLWNPRNFKAHVSPHEMLQAVVLCSKKTFQITKQGDGVDFLSWFLNALHSALGGTKKKKKTIVTDVFQGSMRIFTKKLPHPDLPAEEKEQLLHNDEYQETMVESTFMYLTLDLPTAPLYKDEKEQLIIPQVPLFNILAKFNGITEKEYKTYKENFLKRFQLTKLPPYLIFCIKRFTKNNFFVEKNPTIVNFPITNVDLREYLSEEVQAVHENTTYDLIANIVHDGKPSEGSYRIHVLHHGTGKWYELQDLQVTDILPQMITLSEAYIQIWKRRDNDETNQQGA.

2 stretches are compositionally biased toward basic and acidic residues: residues 1–21 and 28–39; these read MSGR…ESES and VKRERDREREPE. 2 disordered regions span residues 1 to 61 and 75 to 96; these read MSGR…SARE and EREV…GRVD. Ser46 bears the Phosphoserine mark. Lys51 participates in a covalent cross-link: Glycyl lysine isopeptide (Lys-Gly) (interchain with G-Cter in SUMO2). Ser82 bears the Phosphoserine mark. Basic and acidic residues predominate over residues 85–96; sequence EREVRAKNGRVD. The segment at 103–200 adopts a UBP-type; degenerate zinc-finger fold; it reads RHCPYLDTIN…YVLKPTFTKQ (98 aa). Zn(2+) contacts are provided by Cys136, Cys139, His155, and His161. A USP domain is found at 225–555; it reads VGLNNIKAND…EAYIQIWKRR (331 aa).

This sequence belongs to the peptidase C19 family. The U4/U6-U5 tri-snRNP complex is a building block of the precatalytic spliceosome (spliceosome B complex). Component of the U4/U6-U5 tri-snRNP complex composed of the U4, U6 and U5 snRNAs and at least PRPF3, PRPF4, PRPF6, PRPF8, PRPF31, SNRNP200, TXNL4A, SNRNP40, SNRPB, SNRPD1, SNRPD2, SNRPD3, SNRPE, SNRPF, SNRPG, DDX23, CD2BP2, PPIH, SNU13, EFTUD2, SART1 and USP39, plus LSM2, LSM3, LSM4, LSM5, LSM6, LSM7 and LSM8.

It is found in the nucleus. The catalysed reaction is Thiol-dependent hydrolysis of ester, thioester, amide, peptide and isopeptide bonds formed by the C-terminal Gly of ubiquitin (a 76-residue protein attached to proteins as an intracellular targeting signal).. Its function is as follows. Deubiquitinating enzyme that plays a role in many cellular processes including cellular antiviral response, epithelial morphogenesis, DNA repair or B-cell development. Plays a role in pre-mRNA splicing as a component of the U4/U6-U5 tri-snRNP, one of the building blocks of the precatalytic spliceosome. Specifically regulates immunoglobulin gene rearrangement in a spliceosome-dependent manner, which involves modulating chromatin interactions at the Igh locus and therefore plays an essential role in B-cell development. Regulates AURKB mRNA levels, and thereby plays a role in cytokinesis and in the spindle checkpoint. Regulates apoptosis and G2/M cell cycle checkpoint in response to DNA damage by deubiquitinating and stabilizing CHK2. Also plays an important role in DNA repair by controlling the recruitment of XRCC4/LIG4 to DNA double-strand breaks for non-homologous end-joining repair. Participates in antiviral activity by affecting the type I IFN signaling by stabilizing STAT1 and decreasing its 'Lys-6'-linked ubiquitination. Contributes to non-canonical Wnt signaling during epidermal differentiation. Acts as a negative regulator NF-kappa-B activation through deubiquitination of 'Lys-48'-linked ubiquitination of NFKBIA. The chain is Ubiquitin carboxyl-terminal hydrolase 39 (USP39) from Pongo abelii (Sumatran orangutan).